We begin with the raw amino-acid sequence, 192 residues long: uncharacterized protein (192 aa).

One can recognise a Nudix hydrolase domain in the interval 29–160 (HRQAAVLIPI…PLDIYRRGDS (132 aa)). Positions 67–89 (GAVDDTDTSVIAAALREAEEEVA) match the Nudix box motif. Residues E83 and E87 each contribute to the Mg(2+) site.

The protein belongs to the Nudix hydrolase family. PCD1 subfamily. It depends on Mn(2+) as a cofactor. Requires Mg(2+) as cofactor.

In terms of biological role, probably mediates the hydrolysis of some nucleoside diphosphate derivatives. This is an uncharacterized protein from Escherichia coli O7:K1 (strain IAI39 / ExPEC).